A 149-amino-acid chain; its full sequence is Probable flagellum biosynthesis repressor protein FlbT (149 aa).

This sequence belongs to the FlbT family.

In terms of biological role, has a post-transcriptional repressor function in flagellum biogenesis. Associates with the 5'-UTR of fljK mRNA and promotes its degradation. The protein is Probable flagellum biosynthesis repressor protein FlbT of Agrobacterium fabrum (strain C58 / ATCC 33970) (Agrobacterium tumefaciens (strain C58)).